Reading from the N-terminus, the 659-residue chain is Probable acyl-coenzyme A oxidase acox-1.5 (659 aa).

FAD-binding positions include 148–151, 156–157, and G190; these read YAQT and GT. Substrate contacts are provided by residues 284–287 and R294; that span reads KVGY. FAD-binding positions include R319 and 339–342; that span reads QQYR. Residues H395 and Q403 each contribute to the ATP site. G410 is an FAD binding site. Substrate is bound at residue 432–433; the sequence is YE. The active-site Proton acceptor is E433. E435 is an FAD binding site. Position 524 to 527 (524 to 527) interacts with ATP; it reads KAAR. A Microbody targeting signal motif is present at residues 657–659; the sequence is SKL.

The protein belongs to the acyl-CoA oxidase family. In terms of assembly, homodimer. FAD serves as cofactor.

Its subcellular location is the peroxisome. It participates in lipid metabolism; peroxisomal fatty acid beta-oxidation. Its activity is regulated as follows. Activated by ATP. ATP binding leads to a conformational change that promotes FAD cofactor binding and enzyme activity. ATP binding likely occurs during acox-1.5 folding and/or dimer formation. Its function is as follows. Involved in the first step of peroxisomal beta-oxidation by catalyzing the desaturation of fatty acid-derived side chains. In Caenorhabditis elegans, this protein is Probable acyl-coenzyme A oxidase acox-1.5.